Consider the following 206-residue polypeptide: Protein-methionine-sulfoxide reductase heme-binding subunit MsrQ (206 aa).

Helical transmembrane passes span 10–30 (VFIA…SAVL), 42–62 (LGLG…LQKL), 75–95 (LGLW…VFVL), 110–130 (PYII…VTSN), 147–167 (LVYV…RADL), and 169–189 (EWAI…PPVM).

It belongs to the MsrQ family. In terms of assembly, heterodimer of a catalytic subunit (MsrP) and a heme-binding subunit (MsrQ). FMN is required as a cofactor. The cofactor is heme b.

Its subcellular location is the cell inner membrane. Functionally, part of the MsrPQ system that repairs oxidized periplasmic proteins containing methionine sulfoxide residues (Met-O), using respiratory chain electrons. Thus protects these proteins from oxidative-stress damage caused by reactive species of oxygen and chlorine generated by the host defense mechanisms. MsrPQ is essential for the maintenance of envelope integrity under bleach stress, rescuing a wide series of structurally unrelated periplasmic proteins from methionine oxidation. MsrQ provides electrons for reduction to the reductase catalytic subunit MsrP, using the quinone pool of the respiratory chain. In Pseudomonas fluorescens (strain SBW25), this protein is Protein-methionine-sulfoxide reductase heme-binding subunit MsrQ.